Consider the following 402-residue polypeptide: Elongation factor Tu (402 aa).

One can recognise a tr-type G domain in the interval 10-212 (KPHVNIGTIG…AVDEYIPTPE (203 aa)). Residues 19-26 (GHVDHGKT) are G1. Residue 19 to 26 (GHVDHGKT) participates in GTP binding. Thr-26 contributes to the Mg(2+) binding site. The G2 stretch occupies residues 60–64 (GITIA). The tract at residues 81 to 84 (DCPG) is G3. Residues 81 to 85 (DCPGH) and 136 to 139 (NKED) each bind GTP. Residues 136–139 (NKED) form a G4 region. The segment at 177-179 (SAF) is G5.

It belongs to the TRAFAC class translation factor GTPase superfamily. Classic translation factor GTPase family. EF-Tu/EF-1A subfamily. As to quaternary structure, monomer.

It localises to the cytoplasm. It catalyses the reaction GTP + H2O = GDP + phosphate + H(+). Functionally, GTP hydrolase that promotes the GTP-dependent binding of aminoacyl-tRNA to the A-site of ribosomes during protein biosynthesis. This Aliarcobacter butzleri (strain RM4018) (Arcobacter butzleri) protein is Elongation factor Tu.